Consider the following 193-residue polypeptide: Thioredoxin reductase-like selenoprotein T1b (193 aa).

Positions 1–21 (METRCLYLLLVCVLSVNHATA) are cleaved as a signal peptide. Residues 44–47 (CVSU) constitute a cross-link (cysteinyl-selenocysteine (Cys-Sec)). Sec47 is a non-standard amino acid (selenocysteine).

The protein belongs to the SelWTH family. Selenoprotein T subfamily. Post-translationally, may contain a selenide-sulfide bond between Cys-44 and Sec-47. This bond is speculated to serve as redox-active pair. Widely expressed in the embryo. High level in embryonic blood at 24 hours post-fertilization (hpf).

Its subcellular location is the endoplasmic reticulum membrane. The catalysed reaction is [thioredoxin]-dithiol + NADP(+) = [thioredoxin]-disulfide + NADPH + H(+). Its function is as follows. Selenoprotein with thioredoxin reductase-like oxidoreductase activity. This is Thioredoxin reductase-like selenoprotein T1b from Danio rerio (Zebrafish).